The chain runs to 124 residues: Small ribosomal subunit protein uS12 (124 aa).

The disordered stretch occupies residues 1–23 (MATINQLVRKPRRSKVTKSNSAA). Asp-89 bears the 3-methylthioaspartic acid mark.

The protein belongs to the universal ribosomal protein uS12 family. In terms of assembly, part of the 30S ribosomal subunit. Contacts proteins S8 and S17. May interact with IF1 in the 30S initiation complex.

Its function is as follows. With S4 and S5 plays an important role in translational accuracy. Functionally, interacts with and stabilizes bases of the 16S rRNA that are involved in tRNA selection in the A site and with the mRNA backbone. Located at the interface of the 30S and 50S subunits, it traverses the body of the 30S subunit contacting proteins on the other side and probably holding the rRNA structure together. The combined cluster of proteins S8, S12 and S17 appears to hold together the shoulder and platform of the 30S subunit. This Pseudoalteromonas translucida (strain TAC 125) protein is Small ribosomal subunit protein uS12.